We begin with the raw amino-acid sequence, 514 residues long: 23S rRNA (uracil(1939)-C(5))-methyltransferase RlmD (514 aa).

4 residues coordinate [4Fe-4S] cluster: Cys70, Cys76, Cys79, and Cys158. S-adenosyl-L-methionine is bound by residues Gln272, Phe301, Asn306, Glu322, Asn350, and Asp371. Cys398 serves as the catalytic Nucleophile.

The protein belongs to the class I-like SAM-binding methyltransferase superfamily. RNA M5U methyltransferase family. RlmD subfamily.

The catalysed reaction is uridine(1939) in 23S rRNA + S-adenosyl-L-methionine = 5-methyluridine(1939) in 23S rRNA + S-adenosyl-L-homocysteine + H(+). Catalyzes the formation of 5-methyl-uridine at position 1939 (m5U1939) in 23S rRNA. In Chromobacterium violaceum (strain ATCC 12472 / DSM 30191 / JCM 1249 / CCUG 213 / NBRC 12614 / NCIMB 9131 / NCTC 9757 / MK), this protein is 23S rRNA (uracil(1939)-C(5))-methyltransferase RlmD.